A 1097-amino-acid chain; its full sequence is DNA-directed RNA polymerase subunit beta (1097 aa).

Residues 1072–1097 (QDINPRRNTPSRPTYESLGTSEYEED) are disordered. Polar residues predominate over residues 1077–1091 (RRNTPSRPTYESLGT).

The protein belongs to the RNA polymerase beta chain family. In cyanobacteria the RNAP catalytic core is composed of 2 alpha, 1 beta, 1 beta', 1 gamma and 1 omega subunit. When a sigma factor is associated with the core the holoenzyme is formed, which can initiate transcription.

The catalysed reaction is RNA(n) + a ribonucleoside 5'-triphosphate = RNA(n+1) + diphosphate. Functionally, DNA-dependent RNA polymerase catalyzes the transcription of DNA into RNA using the four ribonucleoside triphosphates as substrates. The sequence is that of DNA-directed RNA polymerase subunit beta from Prochlorococcus marinus (strain MIT 9215).